Consider the following 599-residue polypeptide: MRSHRCGEVNESLLGQEVGLCGWVHRRRDHGGVIFVDLRDREGLVQVVFDPDHPEPFSLAETVRSEYVIRVVGQVRARPEGTENPNLKSGRVEVLATSLEILNRSETPPFPIESDIEVNEEMRLRYRYIDLRRPVMQQRMRLRRDITRFLRNFLDHHGFYEIETPFLTKATPEGARDYLVPSRTHPHSFFALPQSPQLYKQLLMISGMDRYYQVVRCFRDEDLRADRQPEFTQLDIETSFMNEDQIMTLMEAMIRDLFRETLNEELPDPFPRMTYAEAMRRYASDKPDLRIPLELVDIADLMAGVEFKVFAGPAADPEGRVVALKLPGGGDLSRKDIDDLTRFVGIYGAKGLAYVKVNDLGAGLEGLQSPILKFMPESTIRGILERTEAQTGDLIFFGADKARIVNESMGALRVKLGQDRGLVEKGWRPLWVTDFPMFEWDEKSGRWVALHHPFTAPKCSEEQLRQNPGRALSRAYDMVLNGTEIGGGSVRIHRTEMQQTVFDLLGIGEEEAQQKFGFLLNALRYGCPPHGGLAFGLDRLVMLMSGASSIREVMAFPKTQSAWCPLIDAPAQVNDAQLHELGIRLRKNPAVEGGTVPST.

Residue glutamate 173 participates in L-aspartate binding. An aspartate region spans residues 197–200 (QLYK). Arginine 219 is a binding site for L-aspartate. Residues 219-221 (RDE) and glutamine 228 contribute to the ATP site. Histidine 451 is an L-aspartate binding site. Glutamate 484 serves as a coordination point for ATP. Arginine 491 is a binding site for L-aspartate. An ATP-binding site is contributed by 536 to 539 (GLDR).

This sequence belongs to the class-II aminoacyl-tRNA synthetase family. Type 1 subfamily. In terms of assembly, homodimer.

The protein localises to the cytoplasm. The catalysed reaction is tRNA(Asx) + L-aspartate + ATP = L-aspartyl-tRNA(Asx) + AMP + diphosphate. In terms of biological role, aspartyl-tRNA synthetase with relaxed tRNA specificity since it is able to aspartylate not only its cognate tRNA(Asp) but also tRNA(Asn). Reaction proceeds in two steps: L-aspartate is first activated by ATP to form Asp-AMP and then transferred to the acceptor end of tRNA(Asp/Asn). The sequence is that of Aspartate--tRNA(Asp/Asn) ligase from Methylococcus capsulatus (strain ATCC 33009 / NCIMB 11132 / Bath).